Consider the following 237-residue polypeptide: 2-C-methyl-D-erythritol 4-phosphate cytidylyltransferase (237 aa).

This sequence belongs to the IspD/TarI cytidylyltransferase family. IspD subfamily.

It carries out the reaction 2-C-methyl-D-erythritol 4-phosphate + CTP + H(+) = 4-CDP-2-C-methyl-D-erythritol + diphosphate. It functions in the pathway isoprenoid biosynthesis; isopentenyl diphosphate biosynthesis via DXP pathway; isopentenyl diphosphate from 1-deoxy-D-xylulose 5-phosphate: step 2/6. Its function is as follows. Catalyzes the formation of 4-diphosphocytidyl-2-C-methyl-D-erythritol from CTP and 2-C-methyl-D-erythritol 4-phosphate (MEP). This chain is 2-C-methyl-D-erythritol 4-phosphate cytidylyltransferase, found in Clostridioides difficile (strain 630) (Peptoclostridium difficile).